Here is a 92-residue protein sequence, read N- to C-terminus: Large ribosomal subunit protein eL43 (92 aa).

Residues cysteine 39, cysteine 42, cysteine 57, and cysteine 60 each coordinate Zn(2+). Residues cysteine 39 to cysteine 60 form a C4-type zinc finger.

It belongs to the eukaryotic ribosomal protein eL43 family. Component of the large ribosomal subunit.

Its subcellular location is the cytoplasm. In terms of biological role, component of the large ribosomal subunit. The ribosome is a large ribonucleoprotein complex responsible for the synthesis of proteins in the cell. The polypeptide is Large ribosomal subunit protein eL43 (rpl37a) (Ictalurus punctatus (Channel catfish)).